The primary structure comprises 64 residues: Alpha-conotoxin-like Ac1.1a (64 aa).

An N-terminal signal peptide occupies residues 1–21; the sequence is MGMRMMFTLFLLVVLTTTVVS. A propeptide spanning residues 22–47 is cleaved from the precursor; sequence YPSDSASDGRDDEAKDERSDMYELKR. 2 disulfide bridges follow: Cys-51/Cys-56 and Cys-52/Cys-62. Cys-62 is subject to Cysteine amide.

This sequence belongs to the conotoxin A superfamily. As to expression, expressed by the venom duct.

Its subcellular location is the secreted. In terms of biological role, alpha-conotoxins act on postsynaptic membranes, they bind to the nicotinic acetylcholine receptors (nAChR) and thus inhibit them. This Conus achatinus (Little frog cone) protein is Alpha-conotoxin-like Ac1.1a.